The primary structure comprises 130 residues: Cytidine deaminase (130 aa).

In terms of domain architecture, CMP/dCMP-type deaminase spans 3–130 (VNLEWIIKQL…ELLMNGFKKS (128 aa)). A substrate-binding site is contributed by 43–45 (NIE). Cys54 serves as a coordination point for Zn(2+). The active-site Proton donor is the Glu56. Zn(2+) contacts are provided by Cys88 and Cys91.

The protein belongs to the cytidine and deoxycytidylate deaminase family. As to quaternary structure, homodimer. Zn(2+) serves as cofactor.

The catalysed reaction is cytidine + H2O + H(+) = uridine + NH4(+). The enzyme catalyses 2'-deoxycytidine + H2O + H(+) = 2'-deoxyuridine + NH4(+). Its function is as follows. This enzyme scavenges exogenous and endogenous cytidine and 2'-deoxycytidine for UMP synthesis. In Mycoplasma genitalium (strain ATCC 33530 / DSM 19775 / NCTC 10195 / G37) (Mycoplasmoides genitalium), this protein is Cytidine deaminase (cdd).